A 234-amino-acid chain; its full sequence is Bradykinin-releasing enzyme KR-E-1 (234 aa).

The 225-residue stretch at 1–225 (VIGGDECNIN…YSDWIQSIIA (225 aa)) folds into the Peptidase S1 domain. Disulfide bonds link Cys-7–Cys-139, Cys-26–Cys-42, Cys-74–Cys-232, Cys-118–Cys-186, Cys-150–Cys-165, and Cys-176–Cys-201. A glycan (N-linked (GlcNAc...) asparagine) is linked at Asn-20. Active-site charge relay system residues include His-41 and Asp-86. Residue Ser-180 is the Charge relay system of the active site.

It belongs to the peptidase S1 family. Snake venom subfamily. Monomer. As to expression, expressed by the venom gland.

Its subcellular location is the secreted. Bradykinin-releasing enzyme. Releases bradykinin from bovine HMW kininogen. Has anticoagulant activity. Increases permeability of capillaries by intradermal injection into rabbits. The sequence is that of Bradykinin-releasing enzyme KR-E-1 from Gloydius ussuriensis (Ussuri mamushi).